The sequence spans 356 residues: MKLNVNLPDHPYDVIIENGALANIGNWVSSLWKKQKIVLISDNHVNGLYGQKVVDQLEKSGFEVETFEFPEGEASKNLLTAEKAWNFCAEFGLTRSDGIIALGGGVTGDLAGFVASTYMRGIHFLQIPTSLTAQVDSSIGGKTGINSKMAKNMIGTFTQPDGVLIDPEVLKTLGQREFCEGLGEVIKCALIADKDLWNLLTDLSAKDLLENFAKIEEIIYRSCEVKRKVVVDDELDNGVRLYLNFGHTIGHAVENTAGYGKVMHGEAVAIGMVQISKIAEKKGLMPLGITDEIRKMVKKYGLPDDYQPWDEALLFKALTHDKKARGTIIKTVIVPEIGTAKINEVTFEEMKEYLKK.

NAD(+)-binding positions include 71-76, 105-109, 129-130, Lys-142, and Lys-151; these read EGEASK, GVTGD, and TS. Residues Glu-184, His-247, and His-264 each coordinate Zn(2+).

This sequence belongs to the sugar phosphate cyclases superfamily. Dehydroquinate synthase family. Co(2+) serves as cofactor. The cofactor is Zn(2+). Requires NAD(+) as cofactor.

It localises to the cytoplasm. The catalysed reaction is 7-phospho-2-dehydro-3-deoxy-D-arabino-heptonate = 3-dehydroquinate + phosphate. The protein operates within metabolic intermediate biosynthesis; chorismate biosynthesis; chorismate from D-erythrose 4-phosphate and phosphoenolpyruvate: step 2/7. Functionally, catalyzes the conversion of 3-deoxy-D-arabino-heptulosonate 7-phosphate (DAHP) to dehydroquinate (DHQ). In Lactococcus lactis subsp. cremoris (strain MG1363), this protein is 3-dehydroquinate synthase.